We begin with the raw amino-acid sequence, 23 residues long: Toxin Acra2 (23 aa).

In terms of domain architecture, LCN-type CS-alpha/beta spans 2–23 (KDGYIVDSNGCAPECFPTNXGC).

Post-translationally, contains 4 disulfide bonds. Expressed by the venom gland.

The protein resides in the secreted. Its function is as follows. Excitatory insect toxins induce a spastic paralysis. They bind voltage-independently at site-4 of sodium channels (Nav) and shift the voltage of activation toward more negative potentials thereby affecting sodium channel activation and promoting spontaneous and repetitive firing. Is lethal to mice. Is about 1% of the total protein in the venom. The protein is Toxin Acra2 of Androctonus crassicauda (Arabian fat-tailed scorpion).